We begin with the raw amino-acid sequence, 146 residues long: Hemoglobin subunit beta (146 aa).

Residues 2–146 (HWSAEEKQLI…VAHALARKYH (145 aa)) enclose the Globin domain. Heme b contacts are provided by H63 and H92.

It belongs to the globin family. Heterotetramer of two alpha chains and two beta chains. In terms of tissue distribution, red blood cells.

Functionally, involved in oxygen transport from the lung to the various peripheral tissues. The protein is Hemoglobin subunit beta (HBB) of Aptenodytes forsteri (Emperor penguin).